The primary structure comprises 262 residues: Small ribosomal subunit protein eS1 (262 aa).

This sequence belongs to the eukaryotic ribosomal protein eS1 family. In terms of assembly, component of the small ribosomal subunit. Mature ribosomes consist of a small (40S) and a large (60S) subunit. The 40S subunit contains about 33 different proteins and 1 molecule of RNA (18S). The 60S subunit contains about 49 different proteins and 3 molecules of RNA (25S, 5.8S and 5S).

The protein localises to the cytoplasm. The polypeptide is Small ribosomal subunit protein eS1 (Brassica campestris (Field mustard)).